The sequence spans 194 residues: Fe/S biogenesis protein NfuA (194 aa).

Residues Cys-152 and Cys-155 each contribute to the [4Fe-4S] cluster site.

The protein belongs to the NfuA family. In terms of assembly, homodimer. [4Fe-4S] cluster serves as cofactor.

Functionally, involved in iron-sulfur cluster biogenesis. Binds a 4Fe-4S cluster, can transfer this cluster to apoproteins, and thereby intervenes in the maturation of Fe/S proteins. Could also act as a scaffold/chaperone for damaged Fe/S proteins. The chain is Fe/S biogenesis protein NfuA from Pseudomonas putida (strain GB-1).